The chain runs to 253 residues: uncharacterized protein (253 aa).

Positions 1–19 (MHYLKKVTIYISLLILVSG) are cleaved as a signal peptide. A lipid anchor (N-palmitoyl cysteine) is attached at Cys-20. Cys-20 is lipidated: S-diacylglycerol cysteine.

The protein belongs to the staphylococcal tandem lipoprotein family.

The protein resides in the cell membrane. This is an uncharacterized protein from Staphylococcus epidermidis (strain ATCC 35984 / DSM 28319 / BCRC 17069 / CCUG 31568 / BM 3577 / RP62A).